We begin with the raw amino-acid sequence, 446 residues long: Elongation factor 1-alpha (446 aa).

The 226-residue stretch at 5–230 (KNHLNLVVIG…DALDQPKRPK (226 aa)) folds into the tr-type G domain. The tract at residues 14-21 (GHVDSGKS) is G1. 14 to 21 (GHVDSGKS) lines the GTP pocket. The interval 70 to 74 (GITID) is G2. A G3 region spans residues 91–94 (DAPG). GTP contacts are provided by residues 91-95 (DAPGH) and 153-156 (NKMD). Residues 153-156 (NKMD) form a G4 region. The G5 stretch occupies residues 194 to 196 (SGW).

This sequence belongs to the TRAFAC class translation factor GTPase superfamily. Classic translation factor GTPase family. EF-Tu/EF-1A subfamily.

It is found in the cytoplasm. Its function is as follows. This protein promotes the GTP-dependent binding of aminoacyl-tRNA to the A-site of ribosomes during protein biosynthesis. This chain is Elongation factor 1-alpha (EFAA), found in Stylonychia lemnae (Ciliate).